Reading from the N-terminus, the 253-residue chain is 5'-nucleotidase SurE (253 aa).

A divalent metal cation is bound by residues Asp-8, Asp-9, Ser-39, and Asn-92.

Belongs to the SurE nucleotidase family. A divalent metal cation is required as a cofactor.

Its subcellular location is the cytoplasm. It carries out the reaction a ribonucleoside 5'-phosphate + H2O = a ribonucleoside + phosphate. Nucleotidase that shows phosphatase activity on nucleoside 5'-monophosphates. The protein is 5'-nucleotidase SurE of Burkholderia thailandensis (strain ATCC 700388 / DSM 13276 / CCUG 48851 / CIP 106301 / E264).